The following is a 333-amino-acid chain: uncharacterized protein (333 aa).

This is an uncharacterized protein from Ictalurid herpesvirus 1 (strain Auburn) (IcHV-1).